The primary structure comprises 238 residues: Ribonuclease PH (238 aa).

Residues Arg86 and 124-126 (GTR) each bind phosphate.

Belongs to the RNase PH family. Homohexameric ring arranged as a trimer of dimers.

The catalysed reaction is tRNA(n+1) + phosphate = tRNA(n) + a ribonucleoside 5'-diphosphate. Its function is as follows. Phosphorolytic 3'-5' exoribonuclease that plays an important role in tRNA 3'-end maturation. Removes nucleotide residues following the 3'-CCA terminus of tRNAs; can also add nucleotides to the ends of RNA molecules by using nucleoside diphosphates as substrates, but this may not be physiologically important. Probably plays a role in initiation of 16S rRNA degradation (leading to ribosome degradation) during starvation. This is Ribonuclease PH from Citrobacter koseri (strain ATCC BAA-895 / CDC 4225-83 / SGSC4696).